The chain runs to 571 residues: Chaperonin GroEL 1 (571 aa).

Residues 29–32 (TLGP), Lys50, 86–90 (DGTTT), Gly416, and Asp498 each bind ATP.

The protein belongs to the chaperonin (HSP60) family. As to quaternary structure, forms a cylinder of 14 subunits composed of two heptameric rings stacked back-to-back. Interacts with the co-chaperonin GroES.

The protein resides in the cytoplasm. The enzyme catalyses ATP + H2O + a folded polypeptide = ADP + phosphate + an unfolded polypeptide.. Its function is as follows. Together with its co-chaperonin GroES, plays an essential role in assisting protein folding. The GroEL-GroES system forms a nano-cage that allows encapsulation of the non-native substrate proteins and provides a physical environment optimized to promote and accelerate protein folding. The chain is Chaperonin GroEL 1 from Rhodopirellula baltica (strain DSM 10527 / NCIMB 13988 / SH1).